The chain runs to 239 residues: Probable fimbrial chaperone YehC (239 aa).

Positions 1–31 are cleaved as a signal peptide; it reads MAAIPWRPFNLRGIKMKGLLSLLIFSMVLPA.

It belongs to the periplasmic pilus chaperone family.

The protein localises to the periplasm. Part of the yehABCD fimbrial operon. Could contribute to adhesion to various surfaces in specific environmental niches. In Escherichia coli (strain K12), this protein is Probable fimbrial chaperone YehC (yehC).